The following is a 351-amino-acid chain: MREIIERVKEKTTIPVYERTIENVLSAIQASGDVWRIVDLSEEPLPLVVAVVTALYELGYVAFENNQVILTRKGKELVEKYGIGPRADYTCSHCQGRTVEIDAFSELLEQFKEITRDRPEPAHQFDQAYVTPETTVARVALMHSRGDLENKEVFVLGDDDLTSVALMLSGLPKRIAVLDIDERLTKFIEKAADEIGYENIEIFTFDLRKPLPDYALHKFDTFITDPPETVEAIRAFVGRGIATLKGPGCAGYFGITRRESSLDKWREIQRVLLNEFGVVITDIIRNFNEYVNWGYVEETRAWRLLPIKVKPSYNWYKSYMFRIQTLEGSKGFEDEITVGQELYDDEESSTT.

Belongs to the branched-chain polyamine synthase family.

The protein resides in the cytoplasm. It catalyses the reaction 2 S-adenosyl 3-(methylsulfanyl)propylamine + spermidine = N(4)-bis(aminopropyl)spermidine + 2 S-methyl-5'-thioadenosine + 2 H(+). Its pathway is amine and polyamine biosynthesis. Involved in the biosynthesis of branched-chain polyamines, which support the growth of thermophiles under high-temperature conditions. Catalyzes the sequential condensation of spermidine with the aminopropyl groups of decarboxylated S-adenosylmethionines to produce N(4)-bis(aminopropyl)spermidine via N(4)-aminopropylspermidine. Can also use spermine to produce N(4)-aminopropylspermine. The polypeptide is N(4)-bis(aminopropyl)spermidine synthase (Thermococcus kodakarensis (strain ATCC BAA-918 / JCM 12380 / KOD1) (Pyrococcus kodakaraensis (strain KOD1))).